Reading from the N-terminus, the 325-residue chain is Sel1-repeat-containing protein YbeQ (325 aa).

Sel1-like repeat units follow at residues 26–61 (EAQYIVGFYYNRDSAIDSPDDEKAFYWLKLAAEQGH), 63–97 (EAQYSLGQKYTEDKSRHKDNEQAIFWLKKAALQGH), 103–130 (ALGWTLDRGEAPNYKEAVVWYQIAAESG), 132–167 (SYAQNNLGWMYRNGNGVAKDYALAFFWYKQAALQGH), 168–203 (SDAQNNLADLYEDGKGVAQNKTLAAFWYLKSAQQGN), 205–239 (HAQFQIAWDYNAGEGVDQDYKQAMYWYLKAAAQGS), 242–275 (AYVNIGYMYKHGQGVEKDYQAAFEWFTKAAECND), and 280–305 (YNLAIMYHYGEGRPVDLRQALDLYRK).

This sequence to E.coli YbeT.

The polypeptide is Sel1-repeat-containing protein YbeQ (ybeQ) (Escherichia coli (strain K12)).